Consider the following 317-residue polypeptide: Transaldolase (317 aa).

Lysine 131 acts as the Schiff-base intermediate with substrate in catalysis.

This sequence belongs to the transaldolase family. Type 1 subfamily. Homodimer.

It localises to the cytoplasm. The catalysed reaction is D-sedoheptulose 7-phosphate + D-glyceraldehyde 3-phosphate = D-erythrose 4-phosphate + beta-D-fructose 6-phosphate. Its pathway is carbohydrate degradation; pentose phosphate pathway; D-glyceraldehyde 3-phosphate and beta-D-fructose 6-phosphate from D-ribose 5-phosphate and D-xylulose 5-phosphate (non-oxidative stage): step 2/3. In terms of biological role, transaldolase is important for the balance of metabolites in the pentose-phosphate pathway. In Baumannia cicadellinicola subsp. Homalodisca coagulata, this protein is Transaldolase.